A 519-amino-acid polypeptide reads, in one-letter code: Cyclic AMP-responsive element-binding protein 3-like protein 2 (519 aa).

Residues 1 to 374 (MEIMDSGEPF…SCRVTGTQTS (374 aa)) lie on the Cytoplasmic side of the membrane. Disordered regions lie at residues 58–77 (GRGD…PVPP), 85–121 (YSLC…MEQE), and 193–261 (GLEC…SGPL). Over residues 109 to 119 (ADSESDEWPME) the composition is skewed to acidic residues. Low complexity-rich tracts occupy residues 205–217 (SSVG…SQSP) and 240–249 (PSSLSSSPLL). Positions 291 to 354 (ALKKIRRKIK…KSLLQQLHSL (64 aa)) constitute a bZIP domain. The segment at 293–322 (KKIRRKIKNKISAQESRRKKKEYVDALEKK) is basic motif. A leucine-zipper region spans residues 333–354 (LRRKVENLECTNKSLLQQLHSL). A helical; Signal-anchor for type II membrane protein membrane pass occupies residues 375 to 395 (TCLMVVVLCFSLFLGSFYPGL). Residues 396–519 (SPCSSITKAD…QLDRTVNETS (124 aa)) are Lumenal-facing. The short motif at 423–426 (RSLL) is the S1P recognition element. Residues asparagine 485, asparagine 503, and asparagine 516 are each glycosylated (N-linked (GlcNAc...) asparagine).

This sequence belongs to the bZIP family. ATF subfamily. Binds DNA as a dimer. Post-translationally, upon ER stress, translocated to the Golgi apparatus, where it is processed by regulated intramembrane proteolysis (RIP) to release the cytosol-facing N-terminal transcription factor domain. The cleavage is performed sequentially by site-1 and site-2 proteases (S1P/mbtps1 and S2P/mbtps2).

It is found in the endoplasmic reticulum membrane. The protein resides in the nucleus. Transcription factor involved in unfolded protein response (UPR). In the absence of endoplasmic reticulum (ER) stress, inserted into ER membranes, with N-terminal DNA-binding and transcription activation domains oriented toward the cytosolic face of the membrane. In response to ER stress, transported to the Golgi, where it is cleaved in a site-specific manner by resident proteases S1P/mbtps1 and S2P/mbtps2. The released N-terminal cytosolic domain is translocated to the nucleus to effect transcription of specific target genes. Plays a critical role in chondrogenesis. May protect neuroblastoma cells from ER stress-induced death. In vitro activates transcription of target genes via direct binding to the CRE site. The sequence is that of Cyclic AMP-responsive element-binding protein 3-like protein 2 (creb3l2) from Danio rerio (Zebrafish).